The chain runs to 477 residues: Interferon gamma receptor 1 (477 aa).

The signal sequence occupies residues 1 to 25; sequence MGPQAAAGRMILLVVLMLSAKVGSG. The Extracellular segment spans residues 26–254; it reads ALTSTEDPEP…PPFHDDRKDS (229 aa). Residues asparagine 61 and asparagine 85 are each glycosylated (N-linked (GlcNAc...) asparagine). Cystine bridges form between cysteine 83/cysteine 91, cysteine 128/cysteine 174, cysteine 203/cysteine 208, and cysteine 222/cysteine 243. Residues 255–275 traverse the membrane as a helical segment; sequence IWILVVAPLTVFTVVILVFAY. Topologically, residues 276–477 are cytoplasmic; it reads WYTKKNSFKR…RLTGEAQELS (202 aa). 2 disordered regions span residues 335-386 and 402-446; these read TVTA…LSSN and SDSG…SGYD. A Phosphoserine modification is found at serine 362. The residue at position 367 (threonine 367) is a Phosphothreonine. Residue serine 370 is modified to Phosphoserine. Phosphothreonine is present on residues threonine 373 and threonine 375. The segment covering 375–386 has biased composition (polar residues); sequence TQRRSFSLLSSN. Phosphoserine occurs at positions 379 and 402. Positions 402–416 are enriched in low complexity; that stretch reads SDSGLVGSGSSISDL. At tyrosine 445 the chain carries Phosphotyrosine.

It belongs to the type II cytokine receptor family. In terms of assembly, monomer. Heterodimer with IFNGR2, to form the IFNG receptor complex. Interacts with JAK1. Interacts (when phosphorylated) with STAT1. Interacts with SOCS1. In terms of processing, phosphorylated at Ser/Thr residues. Phosphorylation of Tyr-445 is required for IFNG receptor signal transduction. Influenza virus infection leads to phosphorylation in a CSNK1A1-dependent manner. Post-translationally, ubiquitinated after phosphorylation in a CSNK1A1-dependent manner, leading to the lysosome-dependent degradation. Proteasomally degraded through 'Lys-48'-mediated ubiquitination. Ubiquitination is necessary for efficient IFNGR1 signaling.

It localises to the cell membrane. Functionally, receptor subunit for interferon gamma/INFG that plays crucial roles in antimicrobial, antiviral, and antitumor responses by activating effector immune cells and enhancing antigen presentation (, PubMed:20926559, PubMed:27286456). Associates with transmembrane accessory factor IFNGR2 to form a functional receptor. Upon ligand binding, the intracellular domain of IFNGR1 opens out to allow association of downstream signaling components JAK1 and JAK2. In turn, activated JAK1 phosphorylates IFNGR1 to form a docking site for STAT1. Subsequent phosphorylation of STAT1 leads to its dimerization, translocation to the nucleus, and stimulation of target gene transcription. STAT3 can also be activated in a similar manner although activation seems weaker. IFNGR1 intracellular domain phosphorylation also provides a docking site for SOCS1 that regulates the JAK-STAT pathway by competing with STAT1 binding to IFNGR1. The polypeptide is Interferon gamma receptor 1 (Mus musculus (Mouse)).